The sequence spans 152 residues: Probable flagellum biosynthesis repressor protein FlbT (152 aa).

The protein belongs to the FlbT family.

Has a post-transcriptional repressor function in flagellum biogenesis. Associates with the 5'-UTR of fljK mRNA and promotes its degradation. In Brucella anthropi (strain ATCC 49188 / DSM 6882 / CCUG 24695 / JCM 21032 / LMG 3331 / NBRC 15819 / NCTC 12168 / Alc 37) (Ochrobactrum anthropi), this protein is Probable flagellum biosynthesis repressor protein FlbT.